Reading from the N-terminus, the 116-residue chain is Large ribosomal subunit protein bL19 (116 aa).

Belongs to the bacterial ribosomal protein bL19 family.

Functionally, this protein is located at the 30S-50S ribosomal subunit interface and may play a role in the structure and function of the aminoacyl-tRNA binding site. This Clostridium novyi (strain NT) protein is Large ribosomal subunit protein bL19.